Reading from the N-terminus, the 1083-residue chain is Ubiquitin carboxyl-terminal hydrolase 28 (1083 aa).

Positions 60–82 (DQRVKEPSHDTAATEPSEVEESA) are disordered. Ser67 carries the post-translational modification Phosphoserine. A UIM domain is found at 97–116 (DNKDDLQAAIALSLLESPNI). Lys99 is covalently cross-linked (Glycyl lysine isopeptide (Lys-Gly) (interchain with G-Cter in SUMO2)). The 495-residue stretch at 162–656 (VGLKNVGNTC…SAYCLMYIND (495 aa)) folds into the USP domain. The active-site Nucleophile is the Cys171. Ser376 is modified (phosphoserine). The interval 483-539 (DLTAKESSSPKSCSQNAEGSFSSPEDALPNSEVMNGPFTSPHSSLEMPAPPPAPRTV) is disordered. Residues 487–505 (KESSSPKSCSQNAEGSFSS) show a composition bias toward polar residues. The residue at position 556 (Ser556) is a Phosphoserine. His606 serves as the catalytic Proton acceptor. The segment at 703–728 (EEQSCKIPQMESSPNSSSQDFSTSQE) is disordered. Over residues 714–728 (SSPNSSSQDFSTSQE) the composition is skewed to low complexity. The residue at position 720 (Ser720) is a Phosphoserine. The residue at position 1054 (Thr1054) is a Phosphothreonine.

Belongs to the peptidase C19 family. USP28 subfamily. In terms of assembly, interacts with ZNF304. Interacts with PRKD1. Interacts with TP53BP1. Interacts with FBXW7; following DNA damage, dissociates from FBXW7 leading to degradation of MYC. In terms of processing, degraded upon nickel ion level or hypoxia exposure. Phosphorylated upon DNA damage at Ser-67 and Ser-720, by ATM or ATR. Phosphorylated by PRKD1.

It is found in the nucleus. Its subcellular location is the nucleoplasm. The catalysed reaction is Thiol-dependent hydrolysis of ester, thioester, amide, peptide and isopeptide bonds formed by the C-terminal Gly of ubiquitin (a 76-residue protein attached to proteins as an intracellular targeting signal).. Its function is as follows. Deubiquitinase involved in DNA damage response checkpoint and MYC proto-oncogene stability. Involved in DNA damage induced apoptosis by specifically deubiquitinating proteins of the DNA damage pathway such as CLSPN. Also involved in G2 DNA damage checkpoint, by deubiquitinating CLSPN, and preventing its degradation by the anaphase promoting complex/cyclosome (APC/C). In contrast, it does not deubiquitinate PLK1. Specifically deubiquitinates MYC in the nucleoplasm, leading to prevent MYC degradation by the proteasome: acts by specifically interacting with FBXW7 (FBW7alpha) in the nucleoplasm and counteracting ubiquitination of MYC by the SCF(FBXW7) complex. Deubiquitinates ZNF304, hence preventing ZNF304 degradation by the proteasome and leading to the activated KRAS-mediated promoter hypermethylation and transcriptional silencing of tumor suppressor genes (TSGs) in a subset of colorectal cancers (CRC) cells. In Rattus norvegicus (Rat), this protein is Ubiquitin carboxyl-terminal hydrolase 28 (Usp28).